The chain runs to 333 residues: Squamosa promoter-binding-like protein 8 (333 aa).

Residues 1-28 form a disordered region; sequence MLDYEWDNPSSIVLSGDERNPDSDPTRS. The span at 16-25 shows a compositional bias: basic and acidic residues; it reads GDERNPDSDP. The interval 179 to 269 is sufficient and necessary for DNA binding; sequence MANSLSTPRC…RKCHQSASAT (91 aa). An SBP-type zinc finger spans residues 185-262; sequence TPRCQAEGCN…ADHNRRRRKC (78 aa). Residues Cys188, Cys193, Cys210, His213, Cys229, Cys232, His236, and Cys248 each coordinate Zn(2+). Positions 245–261 match the Bipartite nuclear localization signal motif; sequence KRSCRKRLADHNRRRRK. 2 disordered regions span residues 254 to 303 and 314 to 333; these read DHNR…TISL and TASSSTSASSSSNSMFFSSG. The segment covering 264–284 has biased composition (polar residues); it reads QSASATQDTGTGKTTPKSPND. Residues 289–299 are compositionally biased toward low complexity; that stretch reads ASSSPSSNAPP.

Zn(2+) serves as cofactor. Expressed in shoot apical region and early floral tissues. Transcripts levels increase in developing pollen sacs, and decrease in later stage of anther development. Strongly expressed in the placental region of the carpels.

It is found in the nucleus. The protein localises to the cytoplasm. In terms of biological role, trans-acting factor that binds specifically to the consensus nucleotide sequence 5'-TNCGTACAA-3'. Binds specifically to the 5'-GTAC-3' core sequence. Involved in development and floral organogenesis. Required for ovule differentiation, pollen production, filament elongation, seed formation and siliques elongation. Also seems to play a role in the formation of trichomes on sepals. May positively modulate gibberellin (GA) signaling in flower. The polypeptide is Squamosa promoter-binding-like protein 8 (SPL8) (Arabidopsis thaliana (Mouse-ear cress)).